The sequence spans 437 residues: GTPase Der (437 aa).

2 consecutive EngA-type G domains span residues Pro-3–Glu-168 and Ile-178–Arg-353. Residues Gly-9 to Ser-16, Asp-56 to Tyr-60, Asn-120 to Asp-123, Gly-184 to Ser-191, Asp-231 to Leu-235, and Asn-296 to Asp-299 contribute to the GTP site. The KH-like domain maps to Gln-354 to Lys-437.

Belongs to the TRAFAC class TrmE-Era-EngA-EngB-Septin-like GTPase superfamily. EngA (Der) GTPase family. As to quaternary structure, associates with the 50S ribosomal subunit.

Functionally, GTPase that plays an essential role in the late steps of ribosome biogenesis. In Chlorobaculum tepidum (strain ATCC 49652 / DSM 12025 / NBRC 103806 / TLS) (Chlorobium tepidum), this protein is GTPase Der.